A 166-amino-acid chain; its full sequence is NADPH-dependent 7-cyano-7-deazaguanine reductase (166 aa).

C57 functions as the Thioimide intermediate in the catalytic mechanism. Residue D64 is the Proton donor of the active site. Substrate-binding positions include 79–81 (VES) and 98–99 (HE).

This sequence belongs to the GTP cyclohydrolase I family. QueF type 1 subfamily.

Its subcellular location is the cytoplasm. The catalysed reaction is 7-aminomethyl-7-carbaguanine + 2 NADP(+) = 7-cyano-7-deazaguanine + 2 NADPH + 3 H(+). It functions in the pathway tRNA modification; tRNA-queuosine biosynthesis. In terms of biological role, catalyzes the NADPH-dependent reduction of 7-cyano-7-deazaguanine (preQ0) to 7-aminomethyl-7-deazaguanine (preQ1). The chain is NADPH-dependent 7-cyano-7-deazaguanine reductase from Staphylococcus aureus (strain JH1).